The primary structure comprises 337 residues: Nodulation protein D 2 (337 aa).

The region spanning 6–63 (LDLNLLVVLDSLMTARNLTAAARSINLSQPAMSAAVARLRAYFGDELFTMRGRTLVPT) is the HTH lysR-type domain. Residues 23–42 (LTAAARSINLSQPAMSAAVA) constitute a DNA-binding region (H-T-H motif).

Belongs to the LysR transcriptional regulatory family.

Its function is as follows. NodD regulates the expression of the nodABCFE genes which encode other nodulation proteins. NodD is also a negative regulator of its own expression. Binds flavonoids as inducers. The chain is Nodulation protein D 2 (nodD2) from Bradyrhizobium sp. (strain NC92).